Reading from the N-terminus, the 35-residue chain is Photosystem II reaction center protein T (35 aa).

A helical membrane pass occupies residues 3–23 (SVAYILIFTLCIGTIFFAIAF).

This sequence belongs to the PsbT family. PSII is composed of 1 copy each of membrane proteins PsbA, PsbB, PsbC, PsbD, PsbE, PsbF, PsbH, PsbI, PsbJ, PsbK, PsbL, PsbM, PsbT, PsbX, PsbY, PsbZ, Psb30/Ycf12, peripheral proteins PsbO, CyanoQ (PsbQ), PsbU, PsbV and a large number of cofactors. It forms dimeric complexes.

It is found in the cellular thylakoid membrane. Found at the monomer-monomer interface of the photosystem II (PS II) dimer, plays a role in assembly and dimerization of PSII. PSII is a light-driven water plastoquinone oxidoreductase, using light energy to abstract electrons from H(2)O, generating a proton gradient subsequently used for ATP formation. This is Photosystem II reaction center protein T from Nostoc punctiforme (strain ATCC 29133 / PCC 73102).